The primary structure comprises 427 residues: Serine--tRNA ligase (427 aa).

231–233 (TAE) lines the L-serine pocket. 262 to 264 (RSE) provides a ligand contact to ATP. Glutamate 285 serves as a coordination point for L-serine. Residue 349-352 (EISS) coordinates ATP. Position 385 (serine 385) interacts with L-serine.

It belongs to the class-II aminoacyl-tRNA synthetase family. Type-1 seryl-tRNA synthetase subfamily. Homodimer. The tRNA molecule binds across the dimer.

It localises to the cytoplasm. The catalysed reaction is tRNA(Ser) + L-serine + ATP = L-seryl-tRNA(Ser) + AMP + diphosphate + H(+). It catalyses the reaction tRNA(Sec) + L-serine + ATP = L-seryl-tRNA(Sec) + AMP + diphosphate + H(+). The protein operates within aminoacyl-tRNA biosynthesis; selenocysteinyl-tRNA(Sec) biosynthesis; L-seryl-tRNA(Sec) from L-serine and tRNA(Sec): step 1/1. Its function is as follows. Catalyzes the attachment of serine to tRNA(Ser). Is also able to aminoacylate tRNA(Sec) with serine, to form the misacylated tRNA L-seryl-tRNA(Sec), which will be further converted into selenocysteinyl-tRNA(Sec). In Brucella melitensis biotype 2 (strain ATCC 23457), this protein is Serine--tRNA ligase.